Consider the following 278-residue polypeptide: MATH domain and coiled-coil domain-containing protein At1g31400 (278 aa).

An MATH domain is found at E6 to V131. Residues K232 to D267 adopt a coiled-coil conformation.

This chain is MATH domain and coiled-coil domain-containing protein At1g31400, found in Arabidopsis thaliana (Mouse-ear cress).